Reading from the N-terminus, the 167-residue chain is MTHGASKTTPETTRAGRQARIVAILSSTSVRSQSELATLLADDGIDVTQATLSRDLEELGAVKLRGADGGVGVYVVPEDGSPVRGVSGGTARLSRLLSELLVSADSSANLAVLRTPPGAADYLASAIDRAALPYVVGTIAGDDTVFVAAREPMTGSELATVLESLNR.

The protein belongs to the ArgR family.

Its subcellular location is the cytoplasm. It participates in amino-acid biosynthesis; L-arginine biosynthesis [regulation]. In terms of biological role, regulates arginine biosynthesis genes. In Mycobacterium leprae (strain Br4923), this protein is Arginine repressor.